The chain runs to 188 residues: Interferon alpha-2 (188 aa).

The signal sequence occupies residues 1-23; sequence MALTFALLVALLVLSCKSSCSVG. Disulfide bonds link Cys-24–Cys-121 and Cys-52–Cys-161. O-linked (GalNAc...) threonine glycosylation occurs at Thr-129.

The protein belongs to the alpha/beta interferon family. As to quaternary structure, interacts with IFNAR2.

It localises to the secreted. Functionally, produced by macrophages, IFN-alpha have antiviral activities. This Homo sapiens (Human) protein is Interferon alpha-2 (IFNA2).